A 366-amino-acid chain; its full sequence is Histidinol-phosphate aminotransferase (366 aa).

K228 carries the N6-(pyridoxal phosphate)lysine modification.

It belongs to the class-II pyridoxal-phosphate-dependent aminotransferase family. Histidinol-phosphate aminotransferase subfamily. In terms of assembly, homodimer. It depends on pyridoxal 5'-phosphate as a cofactor.

The enzyme catalyses L-histidinol phosphate + 2-oxoglutarate = 3-(imidazol-4-yl)-2-oxopropyl phosphate + L-glutamate. The protein operates within amino-acid biosynthesis; L-histidine biosynthesis; L-histidine from 5-phospho-alpha-D-ribose 1-diphosphate: step 7/9. This is Histidinol-phosphate aminotransferase from Campylobacter fetus subsp. fetus (strain 82-40).